The following is a 382-amino-acid chain: Alanine racemase 1 (382 aa).

Lysine 39 serves as the catalytic Proton acceptor; specific for D-alanine. The residue at position 39 (lysine 39) is an N6-(pyridoxal phosphate)lysine. A substrate-binding site is contributed by arginine 138. Tyrosine 265 serves as the catalytic Proton acceptor; specific for L-alanine. Substrate is bound at residue methionine 312.

It belongs to the alanine racemase family. Requires pyridoxal 5'-phosphate as cofactor.

The catalysed reaction is L-alanine = D-alanine. It functions in the pathway amino-acid biosynthesis; D-alanine biosynthesis; D-alanine from L-alanine: step 1/1. Catalyzes the interconversion of L-alanine and D-alanine. May also act on other amino acids. This chain is Alanine racemase 1 (alr1), found in Staphylococcus aureus (strain N315).